We begin with the raw amino-acid sequence, 372 residues long: MIFPWKCQSTQRDLWNIFKLWGWTMLCCDFLAHHGTDCWTYHYSEKPMNWQRARRFCRDNYTDLVAIQNKAEIEYLEKTLPFSRSYYWIGIRKIGGIWTWVGTNKSLTEEAENWGDGEPNNKKNKEDCVEIYIKRNKDAGKWNDDACHKLKAALCYTASCQPWSCSGHGECVEIINNYTCNCDVGYYGPQCQFVIQCEPLEAPELGTMDCTHPLGNFSFSSQCAFSCSEGTNLTGIEETTCGPFGNWSSPEPTCQVIQCEPLSAPDLGIMNCSHPLASFSFTSACTFICSEGTELIGKKKTICESSGIWSNPSPICQKLDKSFSMIKEGDYNPLFIPVAVMVTAFSGLAFIIWLARRLKKGKKSKRSMDDPY.

A signal peptide spans 1 to 28 (MIFPWKCQSTQRDLWNIFKLWGWTMLCC). The propeptide occupies 29 to 38 (DFLAHHGTDC). Over 39 to 332 (WTYHYSEKPM…FSMIKEGDYN (294 aa)) the chain is Extracellular. In terms of domain architecture, C-type lectin spans 55-155 (RFCRDNYTDL…ACHKLKAALC (101 aa)). 10 cysteine pairs are disulfide-bonded: Cys57/Cys155, Cys128/Cys147, Cys128/Cys160, Cys160/Cys171, Cys165/Cys180, Cys182/Cys191, Cys197/Cys241, Cys227/Cys254, Cys259/Cys303, and Cys289/Cys316. Asn60 and Asn104 each carry an N-linked (GlcNAc...) asparagine glycan. Ca(2+) contacts are provided by Glu118, Asn120, Glu126, Asn143, and Asp144. Positions 156–192 (YTASCQPWSCSGHGECVEIINNYTCNCDVGYYGPQCQ) constitute an EGF-like domain. Asn177 is a glycosylation site (N-linked (GlcNAc...) asparagine). 2 consecutive Sushi domains span residues 195–256 (IQCE…TCQV) and 257–318 (IQCE…ICQK). Residues Asn216, Asn232, Asn246, and Asn271 are each glycosylated (N-linked (GlcNAc...) asparagine). The chain crosses the membrane as a helical span at residues 333–355 (PLFIPVAVMVTAFSGLAFIIWLA). Over 356-372 (RRLKKGKKSKRSMDDPY) the chain is Cytoplasmic.

The protein belongs to the selectin/LECAM family. In terms of assembly, interaction with SELPLG/PSGL1 and PODXL2 is required for promoting recruitment and rolling of leukocytes. This interaction is dependent on the sialyl Lewis X glycan modification of SELPLG and PODXL2, and tyrosine sulfation modifications of SELPLG. Sulfation on 'Tyr-51' of SELPLG is important for L-selectin binding. Post-translationally, N-glycosylated.

The protein resides in the cell membrane. In terms of biological role, calcium-dependent lectin that mediates cell adhesion by binding to glycoproteins on neighboring cells. Mediates the adherence of lymphocytes to endothelial cells of high endothelial venules in peripheral lymph nodes. Promotes initial tethering and rolling of leukocytes in endothelia. This is L-selectin (SELL) from Pan troglodytes (Chimpanzee).